We begin with the raw amino-acid sequence, 689 residues long: DNA-directed RNA polymerase subunit beta' (689 aa).

Zn(2+)-binding residues include Cys-69, Cys-71, Cys-87, and Cys-90. Mg(2+) is bound by residues Asp-489, Asp-491, and Asp-493.

It belongs to the RNA polymerase beta' chain family. RpoC1 subfamily. As to quaternary structure, in plastids the minimal PEP RNA polymerase catalytic core is composed of four subunits: alpha, beta, beta', and beta''. When a (nuclear-encoded) sigma factor is associated with the core the holoenzyme is formed, which can initiate transcription. Mg(2+) serves as cofactor. Requires Zn(2+) as cofactor.

It is found in the plastid. Its subcellular location is the chloroplast. It catalyses the reaction RNA(n) + a ribonucleoside 5'-triphosphate = RNA(n+1) + diphosphate. Functionally, DNA-dependent RNA polymerase catalyzes the transcription of DNA into RNA using the four ribonucleoside triphosphates as substrates. The protein is DNA-directed RNA polymerase subunit beta' of Lactuca sativa (Garden lettuce).